A 359-amino-acid chain; its full sequence is C-X-C chemokine receptor type 4 (359 aa).

The tract at residues 1–23 (MEPISVSIYTSDNYSEEVGSGDY) is important for chemokine binding and signaling. Residues 1–40 (MEPISVSIYTSDNYSEEVGSGDYDSNKEPCFRDENVHFNR) are Extracellular-facing. Sulfotyrosine is present on tyrosine 9. An N-linked (GlcNAc...) asparagine glycan is attached at asparagine 13. A Sulfotyrosine modification is found at tyrosine 14. Serine 20 carries O-linked (Xyl...) (chondroitin sulfate) serine glycosylation. The residue at position 23 (tyrosine 23) is a Sulfotyrosine. 2 cysteine pairs are disulfide-bonded: cysteine 30/cysteine 281 and cysteine 111/cysteine 193. A helical transmembrane segment spans residues 41–65 (IFLPTIYFIIFLTGIVGNGLVILVM). Residues 66–79 (GYQKKLRSMTDKYR) are Cytoplasmic-facing. The helical transmembrane segment at 80 to 101 (LHLSVADLLFVITLPFWAVDAM) threads the bilayer. The chemokine binding stretch occupies residues 96–99 (WAVD). At 102–112 (ADWYFGKFLCK) the chain is on the extracellular side. A helical transmembrane segment spans residues 113–132 (AVHIIYTVNLYSSVLILAFI). A chemokine binding region spans residues 115–119 (HIIYT). The Cytoplasmic segment spans residues 133–156 (SLDRYLAIVHATNSQRPRKLLAEK). Residues 135 to 137 (DRY) carry the Important for signaling motif. An involved in dimerization; when bound to chemokine region spans residues 137 to 149 (YLAIVHATNSQRP). The chain crosses the membrane as a helical span at residues 157 to 176 (AVYVGVWIPALLLTIPDFIF). The Extracellular portion of the chain corresponds to 177 to 202 (ADVSQGDISQGDDRYICDRLYPDSLW). Residues 193–197 (CDRLY) are chemokine binding, important for signaling. The segment at 198–217 (PDSLWMVVFQFQHIMVGLIL) is involved in dimerization. A helical transmembrane segment spans residues 203 to 223 (MVVFQFQHIMVGLILPGIVIL). Residues 224–248 (SCYCIIISKLSHSKGHQKRKALKTT) lie on the Cytoplasmic side of the membrane. The chain crosses the membrane as a helical span at residues 249-268 (VILILAFFACWLPYYVGISI). The Extracellular segment spans residues 269-289 (DSFILLGVIKQGCDFESIVHK). The interval 273–275 (LLG) is involved in dimerization. Residues 290 to 309 (WISITEALAFFHCCLNPILY) form a helical membrane-spanning segment. Over 310 to 359 (AFLGAKFKSSAQHALNSMSRGSSLKILSKGKRGGHSSVSTESESSSFHSS) the chain is Cytoplasmic. Phosphoserine is present on residues serine 326 and serine 328. Phosphoserine; by PKC and GRK6 is present on residues serine 331 and serine 332. The tract at residues 335-359 (ILSKGKRGGHSSVSTESESSSFHSS) is disordered. Serine 337 is subject to Phosphoserine; by GRK6. Lysine 338 participates in a covalent cross-link: Glycyl lysine isopeptide (Lys-Gly) (interchain with G-Cter in ubiquitin). Residues 344 to 359 (HSSVSTESESSSFHSS) show a composition bias toward low complexity. The residue at position 346 (serine 346) is a Phosphoserine; by GRK6. 2 positions are modified to phosphoserine: serine 355 and serine 358.

Belongs to the G-protein coupled receptor 1 family. In terms of assembly, monomer. Can form homodimers. Interacts with CD164. Interacts with ARRB2; the interaction is dependent on the C-terminal phosphorylation of CXCR4 and allows activation of MAPK1 and MAPK3. Interacts with ARR3; the interaction is dependent on the C-terminal phosphorylation of CXCR4 and modulates calcium mobilization. Interacts with RNF113A; the interaction, enhanced by CXCL12, promotes CXCR4 ubiquitination and subsequent degradation. Interacts (via the cytoplasmic C-terminal) with ITCH (via the WW domains I and II); the interaction, enhanced by CXCL12, promotes CXCR4 ubiquitination and leads to its degradation. Interacts with extracellular ubiquitin. Interacts with DBN1; this interaction is enhanced by antigenic stimulation. Following LPS binding, may form a complex with GDF5, HSP90AA1 and HSPA8. In terms of processing, phosphorylated on agonist stimulation. Rapidly phosphorylated on serine and threonine residues in the C-terminal. Phosphorylation at Ser-331 and Ser-332 leads to recruitment of ITCH, ubiquitination and protein degradation. Ubiquitinated after ligand binding, leading to its degradation. Ubiquitinated by ITCH at the cell membrane on agonist stimulation. The ubiquitin-dependent mechanism, endosomal sorting complex required for transport (ESCRT), then targets CXCR4 for lysosomal degradation. This process is dependent also on prior Ser-/Thr-phosphorylation in the C-terminal of CXCR4. Also binding of ARRB1 to STAM negatively regulates CXCR4 sorting to lysosomes though modulating ubiquitination of SFR5S. Post-translationally, sulfation is required for efficient binding of CXCL12/SDF-1alpha and promotes its dimerization. In terms of processing, O- and N-glycosylated. N-glycosylation can mask coreceptor function. The O-glycosylation chondroitin sulfate attachment does not affect interaction with CXCL12/SDF-1alpha nor its coreceptor activity. As to expression, lymphocytes, macrophages, neutrophils, microglial cells and astrocytes. Found in spleen, thymus, bone marrow, lymph nodes and, at lower levels in brain, small intestine, stomach and kidney. CXCR4-A is predominant in all tissues tested. During embryonic development, high levels are detected in the endothelium of developing blood vessels and in many regions of the developing brain including the olfactory epithelium, olfactory bulb, hippocampus, cerebellum and spinal cord.

The protein resides in the cell membrane. It is found in the cell junction. Its subcellular location is the early endosome. The protein localises to the late endosome. It localises to the lysosome. Its function is as follows. Receptor for the C-X-C chemokine CXCL12/SDF-1 that transduces a signal by increasing intracellular calcium ion levels and enhancing MAPK1/MAPK3 activation. Involved in the AKT signaling cascade. Plays a role in regulation of cell migration, e.g. during wound healing. Acts as a receptor for extracellular ubiquitin; leading to enhanced intracellular calcium ions and reduced cellular cAMP levels. Binds bacterial lipopolysaccharide (LPS) et mediates LPS-induced inflammatory response, including TNF secretion by monocytes. Involved in hematopoiesis and in cardiac ventricular septum formation. Also plays an essential role in vascularization of the gastrointestinal tract, probably by regulating vascular branching and/or remodeling processes in endothelial cells. Involved in cerebellar development. In the CNS, could mediate hippocampal-neuron survival. The sequence is that of C-X-C chemokine receptor type 4 (Cxcr4) from Mus musculus (Mouse).